The following is a 132-amino-acid chain: MAVNDPLGDMLTRIRNAQMRRKGKVQTPGSRLRAHVLDVLQEEGYIRGYSTTEYGNGRSEFEIELKYFDGLPVIREIQRVSKPGRRVYTAVNAIPRVANGLGISIISTPKGVMADHAAREANVGGEVLCKVF.

It belongs to the universal ribosomal protein uS8 family. Part of the 30S ribosomal subunit. Contacts proteins S5 and S12.

Its function is as follows. One of the primary rRNA binding proteins, it binds directly to 16S rRNA central domain where it helps coordinate assembly of the platform of the 30S subunit. The polypeptide is Small ribosomal subunit protein uS8 (Beijerinckia indica subsp. indica (strain ATCC 9039 / DSM 1715 / NCIMB 8712)).